The sequence spans 180 residues: Hypoxanthine-guanine phosphoribosyltransferase (180 aa).

Residues Lys43 and Gly44 each coordinate diphosphate. Glu99 and Asp100 together coordinate Mg(2+). Residue Asp103 is the Proton acceptor of the active site. GMP-binding positions include Lys131, 152–153, and Asp159; that span reads FI. Arg165 serves as a coordination point for diphosphate.

This sequence belongs to the purine/pyrimidine phosphoribosyltransferase family. Mg(2+) is required as a cofactor.

The protein resides in the cytoplasm. It carries out the reaction IMP + diphosphate = hypoxanthine + 5-phospho-alpha-D-ribose 1-diphosphate. The catalysed reaction is GMP + diphosphate = guanine + 5-phospho-alpha-D-ribose 1-diphosphate. The protein operates within purine metabolism; IMP biosynthesis via salvage pathway; IMP from hypoxanthine: step 1/1. Its pathway is purine metabolism; GMP biosynthesis via salvage pathway; GMP from guanine: step 1/1. Purine salvage pathway enzyme that catalyzes the transfer of the ribosyl-5-phosphate group from 5-phospho-alpha-D-ribose 1-diphosphate (PRPP) to the N9 position of the 6-oxopurines hypoxanthine and guanine to form the corresponding ribonucleotides IMP (inosine 5'-monophosphate) and GMP (guanosine 5'-monophosphate), with the release of PPi. This Streptococcus agalactiae serotype III (strain NEM316) protein is Hypoxanthine-guanine phosphoribosyltransferase (hpt).